The chain runs to 530 residues: Growth-regulating factor 1 (530 aa).

A disordered region spans residues 1 to 41 (MDLGVRVSGHETVSSPGQTELGSGFSNKQERSGFDGEDCWR). Positions 11–27 (ETVSSPGQTELGSGFSN) are enriched in polar residues. Positions 28–41 (KQERSGFDGEDCWR) are enriched in basic and acidic residues. One can recognise a QLQ domain in the interval 133–168 (PFSLTQWAELEQQALIYKYITANVPVPSSLLLSLKK). The WRC domain occupies 196-240 (DPEPGRCRRTDGKKWRCSRDAVPDQKYCERHINRGRHRSRKPVEG). 2 consecutive short sequence motifs (bipartite nuclear localization signal) follow at residues 201–211 (RCRRTDGKKWR) and 229–236 (RGRHRSRK). 2 disordered regions span residues 223–250 (CERH…NAAA) and 485–530 (STFG…APSL). The span at 485–508 (STFGSLSNSSSASSTIIGDNNNKN) shows a compositional bias: low complexity. The span at 519-530 (TLMNTSATAPSL) shows a compositional bias: polar residues.

It belongs to the GRF family. As to quaternary structure, interacts with GIF1 and GIF2. As to expression, strongly expressed in actively growing and developing tissues, such as roots, upper stems, and shoot tips containing the shoot apical meristem (SAM) and flower buds. Also expressed in mature flowers, but weakly expressed in mature stems and leaves.

The protein resides in the nucleus. Transcription activator that plays a role in the regulation of cell expansion in leaf and cotyledons tissues. Component of a network formed by miR396, the GRFs and their interacting factors (GIFs) acting in the regulation of meristem function, at least partially through the control of cell proliferation. microRNA396-GRF1/GRF3 regulatory module acts as a developmental regulator in the reprogramming of root cells during cyst nematode infection, leading to the formation of the syncytium. This is Growth-regulating factor 1 (GRF1) from Arabidopsis thaliana (Mouse-ear cress).